Here is a 646-residue protein sequence, read N- to C-terminus: Zinc finger protein 503 (646 aa).

The segment covering 1-11 has biased composition (polar residues); it reads MSTAPSLSALR. Residues 1 to 70 are disordered; sequence MSTAPSLSAL…PPSDPLRQAN (70 aa). The segment covering 16–28 has biased composition (gly residues); it reads SGGGGGGGGGGGA. Low complexity predominate over residues 34–52; it reads SALSGNSSGPGPGSSPAGS. The residue at position 102 (Ser-102) is a Phosphoserine. The interval 121 to 332 is disordered; it reads SQIGKPDPSP…PSAPTSSSVL (212 aa). Low complexity predominate over residues 130 to 139; sequence PSSKLSSVAS. Gly residues-rich tracts occupy residues 140–152 and 189–205; these read NGGG…GGAA and GGGG…GGGV. Lys-209 carries the post-translational modification N6-acetyllysine. Positions 217–226 are enriched in polar residues; that stretch reads ATCQPFTPRT. Low complexity predominate over residues 227-240; that stretch reads GSPSSSASACSPGG. Phosphoserine is present on residues Ser-231 and Ser-237. Residues 250 to 259 show a composition bias toward basic and acidic residues; the sequence is EGKDDKKDTD. Gly residues-rich tracts occupy residues 260-277 and 300-315; these read VGGG…GGPT and GGPG…GGSS. A compositionally biased stretch (low complexity) spans 316-330; that stretch reads GSSSGSGPSAPTSSS. The C2H2-type zinc finger occupies 514-542; it reads HICNWVSANGPCDKRFATSEELLSHLRTH. Arg-636 carries the post-translational modification Omega-N-methylarginine.

This sequence belongs to the Elbow/Noc family.

The protein resides in the nucleus. Functionally, may function as a transcriptional repressor. This Homo sapiens (Human) protein is Zinc finger protein 503 (ZNF503).